A 144-amino-acid polypeptide reads, in one-letter code: MNFKYIVAVSFLIASAYARSEENDEQSLSQRDVLEEESLREIRGIGTKIIGGLKTAVKGALKELASTYVNGKRTAEDHEVMKRLEAVMRDLDSLDYPEEASERETRGFNQEEIANLFTKKEKRILGPVLGLVGSALGGLIKKIG.

An N-terminal signal peptide occupies residues 1-18 (MNFKYIVAVSFLIASAYA). A propeptide spanning residues 19–43 (RSEENDEQSLSQRDVLEEESLREIR) is cleaved from the precursor. Asparagine 70 carries the post-translational modification Asparagine amide. The propeptide occupies 74–123 (TAEDHEVMKRLEAVMRDLDSLDYPEEASERETRGFNQEEIANLFTKKEKR). Position 143 is an isoleucine amide (isoleucine 143).

It belongs to the bombinin family. As to expression, expressed by the skin glands.

Its subcellular location is the secreted. Maximin-11 shows antimicrobial activity against bacteria and against the fungus C.albicans. It has little hemolytic activity. In terms of biological role, maximin-H11 shows antimicrobial activity against bacteria and against the fungus C.albicans. Shows strong hemolytic activity. This chain is Maximins 11/H11, found in Bombina maxima (Giant fire-bellied toad).